The chain runs to 316 residues: uncharacterized protein (316 aa).

The chain crosses the membrane as a helical span at residues 12–34 (RWVCLTSVILFCFCIAVMRYGGV).

Its subcellular location is the membrane. This is an uncharacterized protein from Treponema pallidum (strain Nichols).